Consider the following 186-residue polypeptide: uncharacterized protein (186 aa).

Residues 12-184 enclose the N-acetyltransferase domain; it reads LLKSPVEEDD…HIYKLSKQIR (173 aa).

The protein belongs to the acetyltransferase family.

The protein localises to the cytoplasm. It localises to the nucleus. This is an uncharacterized protein from Schizosaccharomyces pombe (strain 972 / ATCC 24843) (Fission yeast).